We begin with the raw amino-acid sequence, 223 residues long: MARKPLLHYFNGRGRMESIRWLLAAAGEEFDEKFMETAEDLDKLRNDGSLMYQQVPMVEIDGMKLVQTRAILNYVANKHNLYGKDMKERALIDMYTEGVADLYELVLLLPLCPPEQKDAKVDFIKEKIRTRYFPAFEKVLKSHGQDYLVGNRLSKADILLVELLYNVEELDPSAIASFPLLKALKTRISSLPTVKKFLQPGSQRKPPMDEKNLEKAKKIFKIP.

Met1 is subject to N-acetylmethionine. An N-acetylalanine; in Glutathione S-transferase alpha I, N-terminally processed modification is found at Ala2. The GST N-terminal domain maps to 3 to 83 (RKPLLHYFNG…YVANKHNLYG (81 aa)). Position 4 is an N6-succinyllysine (Lys4). Glutathione contacts are provided by residues Tyr9, Arg45, 54-55 (QV), and 67-68 (QT). The 124-residue stretch at 85–208 (DMKERALIDM…QPGSQRKPPM (124 aa)) folds into the GST C-terminal domain.

It belongs to the GST superfamily. Alpha family. In terms of assembly, homodimer or heterodimer of GSTA1 and GSTA2. As to expression, liver and lung.

The protein resides in the cytoplasm. It carries out the reaction RX + glutathione = an S-substituted glutathione + a halide anion + H(+). The enzyme catalyses prostaglandin A2 + glutathione = prostaglandin A2-S-(R)-glutathione. It catalyses the reaction prostaglandin J2 + glutathione = prostaglandin J2-S-(R)-glutathione. The catalysed reaction is (13S)-hydroperoxy-(9Z,11E)-octadecadienoate + 2 glutathione = (13S)-hydroxy-(9Z,11E)-octadecadienoate + glutathione disulfide + H2O. It carries out the reaction androst-5-ene-3,17-dione = androst-4-ene-3,17-dione. Its function is as follows. Glutathione S-transferase that catalyzes the nucleophilic attack of the sulfur atom of glutathione on the electrophilic groups of a wide range of exogenous and endogenous compounds. Involved in the formation of glutathione conjugates of both prostaglandin A2 (PGA2) and prostaglandin J2 (PGJ2). It also catalyzes the isomerization of D5-androstene-3,17-dione (AD) into D4-androstene-3,17-dione and may therefore play an important role in hormone biosynthesis. Through its glutathione-dependent peroxidase activity toward the fatty acid hydroperoxide (13S)-hydroperoxy-(9Z,11E)-octadecadienoate/13-HPODE it is also involved in the metabolism of oxidized linoleic acid. This chain is Glutathione S-transferase alpha I, found in Oryctolagus cuniculus (Rabbit).